A 127-amino-acid chain; its full sequence is MIKQIKRKKVKKNVVVGVVHIQASFNNTIVTITDLGGNTLSTGSAGAVGFKGARKGTPFAAQLASEKAAEKATEYGLKKVEVLVKGQGSGRETAVRAIQNSDIEITAITDITSIPFNGCRPPKRRRV.

The protein belongs to the universal ribosomal protein uS11 family. In terms of assembly, part of the 30S ribosomal subunit.

It localises to the plastid. The protein resides in the chloroplast. The polypeptide is Small ribosomal subunit protein uS11c (Heterosigma akashiwo (strain NIES-293 / 8280G21-1)).